Here is a 566-residue protein sequence, read N- to C-terminus: Cytochrome c oxidase subunit 1 (566 aa).

7 helical membrane-spanning segments follow: residues 29 to 49, 97 to 117, 141 to 161, 189 to 209, 227 to 247, 278 to 298, and 310 to 330; these read IGVL…AFTV, VMIT…ALFG, LSYW…FAPG, LAIF…INMI, LFAW…PVLA, ILWF…FGIV, and IFGY…GFVV. H102 contributes to the Fe(II)-heme a binding site. Cu cation is bound by residues H284 and Y288. The segment at residues 284 to 288 is a cross-link (1'-histidyl-3'-tyrosine (His-Tyr)); that stretch reads HPEVY. H333 and H334 together coordinate Cu cation. Transmembrane regions (helical) follow at residues 348-368 and 381-401; these read FMMA…SWIA and MLWA…GIVL. H419 serves as a coordination point for heme a3. 3 consecutive transmembrane segments (helical) span residues 420–440, 455–475, and 499–519; these read FHYV…YFWI, LHFW…HFLG, and LGAF…FYTL. H421 is a Fe(II)-heme a binding site. The interval 543–566 is disordered; the sequence is TSPPPEHTFEQLPKREDWERAPAH. The segment covering 549-566 has biased composition (basic and acidic residues); that stretch reads HTFEQLPKREDWERAPAH.

The protein belongs to the heme-copper respiratory oxidase family. Cu(2+) is required as a cofactor. Requires heme as cofactor.

The protein resides in the cell membrane. It catalyses the reaction 4 Fe(II)-[cytochrome c] + O2 + 8 H(+)(in) = 4 Fe(III)-[cytochrome c] + 2 H2O + 4 H(+)(out). It functions in the pathway energy metabolism; oxidative phosphorylation. Its function is as follows. Cytochrome c oxidase is the component of the respiratory chain that catalyzes the reduction of oxygen to water. Subunits 1-3 form the functional core of the enzyme complex. Co I is the catalytic subunit of the enzyme. Electrons originating in cytochrome c are transferred via the copper A center of subunit 2 and heme a of subunit 1 to the bimetallic center formed by heme a3 and copper B. This cytochrome c oxidase shows proton pump activity across the membrane in addition to the electron transfer. The chain is Cytochrome c oxidase subunit 1 (ctaD) from Cereibacter sphaeroides (Rhodobacter sphaeroides).